The sequence spans 322 residues: Putative UDP-N-acetylglucosamine--dolichyl-phosphate N-acetylglucosaminephosphotransferase (322 aa).

9 helical membrane passes run 5–25, 46–66, 76–96, 102–122, 123–143, 160–180, 186–206, 222–242, and 295–315; these read AILL…VWVI, IPLL…FSLL, IPAV…DDIF, VRAF…VGHS, IISI…IIII, LNGL…YIGL, TYQA…FLIF, FIGA…ALAI, and YQVV…AVIL.

It belongs to the glycosyltransferase 4 family.

The protein localises to the cell membrane. It carries out the reaction a di-trans,poly-cis-dolichyl phosphate + UDP-N-acetyl-alpha-D-glucosamine = an N-acetyl-alpha-D-glucosaminyl-diphospho-di-trans,poly-cis-dolichol + UMP. Inhibited by tunicamycin. This chain is Putative UDP-N-acetylglucosamine--dolichyl-phosphate N-acetylglucosaminephosphotransferase (gnpTA), found in Saccharolobus solfataricus (strain ATCC 35092 / DSM 1617 / JCM 11322 / P2) (Sulfolobus solfataricus).